A 329-amino-acid polypeptide reads, in one-letter code: Putative glycosyltransferase CsbB (329 aa).

A run of 2 helical transmembrane segments spans residues 231–251 (CFYT…ATFV) and 264–284 (FTII…LGII).

It belongs to the glycosyltransferase 2 family. GtrB subfamily.

Its subcellular location is the cell membrane. The chain is Putative glycosyltransferase CsbB (csbB) from Bacillus subtilis (strain 168).